We begin with the raw amino-acid sequence, 100 residues long: Aspartyl/glutamyl-tRNA(Asn/Gln) amidotransferase subunit C (100 aa).

This sequence belongs to the GatC family. As to quaternary structure, heterotrimer of A, B and C subunits.

The catalysed reaction is L-glutamyl-tRNA(Gln) + L-glutamine + ATP + H2O = L-glutaminyl-tRNA(Gln) + L-glutamate + ADP + phosphate + H(+). It catalyses the reaction L-aspartyl-tRNA(Asn) + L-glutamine + ATP + H2O = L-asparaginyl-tRNA(Asn) + L-glutamate + ADP + phosphate + 2 H(+). Its function is as follows. Allows the formation of correctly charged Asn-tRNA(Asn) or Gln-tRNA(Gln) through the transamidation of misacylated Asp-tRNA(Asn) or Glu-tRNA(Gln) in organisms which lack either or both of asparaginyl-tRNA or glutaminyl-tRNA synthetases. The reaction takes place in the presence of glutamine and ATP through an activated phospho-Asp-tRNA(Asn) or phospho-Glu-tRNA(Gln). This Rickettsia typhi (strain ATCC VR-144 / Wilmington) protein is Aspartyl/glutamyl-tRNA(Asn/Gln) amidotransferase subunit C.